The following is a 93-amino-acid chain: MMLLLAILHKNDADYFIAEAMGVKIIEEEAYKKISKETFEEALKELKNSDVVVYTDFPIGEMNELNLKLIEEAKNLKKRMIFYEDDISVLKEI.

It to B.subtilis YdcN C-terminal region.

This is an uncharacterized protein from Methanocaldococcus jannaschii (strain ATCC 43067 / DSM 2661 / JAL-1 / JCM 10045 / NBRC 100440) (Methanococcus jannaschii).